Here is a 177-residue protein sequence, read N- to C-terminus: Protein TERMINAL FLOWER 1 (177 aa).

This sequence belongs to the phosphatidylethanolamine-binding protein family. Expressed below the apical dome of inflorescence and coflorescence meristems, and in inflorescence stem.

The protein resides in the cytoplasm. Its function is as follows. Controls inflorescence meristem identity and is required for maintenance of an indeterminate inflorescence. Prevents the expression of 'APETALA1' and 'LEAFY'. Also plays a role in the regulation of the time of flowering in the long-day flowering pathway. May form complexes with phosphorylated ligands by interfering with kinases and their effectors. This chain is Protein TERMINAL FLOWER 1 (TFL1), found in Arabidopsis thaliana (Mouse-ear cress).